A 116-amino-acid polypeptide reads, in one-letter code: Helper of Tim protein 13 (116 aa).

The CHY-type; degenerate zinc-finger motif lies at 10–94 (TVDDQSRCVH…SNLICPNCRS (85 aa)). Cysteine 17, histidine 19, cysteine 40, cysteine 43, cysteine 68, cysteine 71, cysteine 89, and cysteine 92 together coordinate Zn(2+).

As to quaternary structure, interacts with the small Tim proteins TIM8, TIM9, TIM10, TIM12, and TIM13.

The protein resides in the mitochondrion intermembrane space. Its subcellular location is the mitochondrion membrane. Functionally, required for the assembly or recycling of the small Tim proteins in the mitochondrial intermembrane, thereby participating in the import and insertion of multi-pass transmembrane proteins into the mitochondrial inner membrane. Probably acts by facilitating the formation of disulfide bonds in small Tim proteins. The protein is Helper of Tim protein 13 (HOT13) of Saccharomyces cerevisiae (strain ATCC 204508 / S288c) (Baker's yeast).